The sequence spans 1186 residues: Probable inactive serine/threonine-protein kinase DDB_G0293184 (1186 aa).

Over residues 1 to 12 the composition is skewed to acidic residues; that stretch reads MEQEDQQYEEDS. Disordered regions lie at residues 1–55 and 99–122; these read MEQE…NNDS and MEQQ…NTNF. Composition is skewed to low complexity over residues 34–48 and 99–110; these read TTTE…TTPT and MEQQQQQQHLQP. Residues 173–437 enclose the Protein kinase domain; the sequence is YESPPTLGKY…VHDLLRHPWL (265 aa). ATP-binding positions include 179–187 and K205; that span reads LGKYDKVIL. Disordered stretches follow at residues 447–468 and 530–551; these read SSSS…GNVN and YNNY…NECG. The span at 453 to 468 shows a compositional bias: polar residues; the sequence is QAHPTVQSNNLNGNVN. Over residues 530–545 the composition is skewed to low complexity; sequence YNNYNNNNNNNNNTND. Residues 631–659 adopt a coiled-coil conformation; sequence LKRTNQMANDLGRKYEILQSNIKRLEDYL. A compositionally biased stretch (polar residues) spans 766–784; the sequence is NNLDPSNNNESVNLSTSPG. Disordered regions lie at residues 766 to 911 and 959 to 988; these read NNLD…NGNN and ENKK…GDVS. Residues 785-836 show a composition bias toward low complexity; the sequence is SLVNSNSNPSISNSLNNNNNNNNNNNNNNNGNPNVIITTNNNCNSNSNGNNI. Residues 847–896 show a composition bias toward basic and acidic residues; sequence KEVKEGKEIKEIKEPKEKDKDKEKDKDKEKDKDKEKDKDKEKEKDKDKEN. Residues 875–909 adopt a coiled-coil conformation; the sequence is EKDKDKEKDKDKEKEKDKDKENNNNNNSNNNNNNG. Over residues 897–911 the composition is skewed to low complexity; the sequence is NNNNNSNNNNNNGNN. Residues 969 to 978 show a composition bias toward polar residues; sequence LDSTNKQSPG. The region spanning 1004–1186 is the Rho-GAP domain; sequence VRLDDLMTRE…LSFPKFNLSV (183 aa).

It belongs to the protein kinase superfamily. STE Ser/Thr protein kinase family.

The protein is Probable inactive serine/threonine-protein kinase DDB_G0293184 of Dictyostelium discoideum (Social amoeba).